The following is a 158-amino-acid chain: Methylglyoxal synthase (158 aa).

The MGS-like domain occupies 1–158; it reads MRRKLRIALV…AFEESLKVKE (158 aa). Substrate-binding positions include His12, Lys16, 38 to 41, and 63 to 64; these read TGTT and SG. The active-site Proton donor/acceptor is Asp69. His96 provides a ligand contact to substrate.

Belongs to the methylglyoxal synthase family.

The catalysed reaction is dihydroxyacetone phosphate = methylglyoxal + phosphate. Catalyzes the formation of methylglyoxal from dihydroxyacetone phosphate. The sequence is that of Methylglyoxal synthase from Treponema socranskii.